Consider the following 531-residue polypeptide: Developmental and secondary metabolism regulator VE1 (531 aa).

Positions 26-220 (NRSLWYQMTV…ADQGCPVRIR (195 aa)) constitute a Velvet domain. The Nuclear localization signal motif lies at 40–45 (ERARAC). Disordered stretches follow at residues 206-435 (LSKT…SQTS) and 447-517 (PVSP…SRAD). Basic and acidic residues predominate over residues 244 to 253 (FERREEDFGR). Residues 295-306 (YPPPPPPPPSYE) are compositionally biased toward pro residues. Over residues 348-357 (YAPTSQSPYS) the composition is skewed to polar residues. Basic and acidic residues predominate over residues 381–390 (LKHELYDRRQ). Residues 391 to 405 (STSTYVPPSPSVYST) show a composition bias toward low complexity. The segment covering 416–427 (SYPPTPVAAPRP) has biased composition (pro residues). The PEST stretch occupies residues 430–461 (MHSQTSLPALKIDQLVSPVSPLPPIEPQTGPA). Residues 479-491 (FAQSTRPLHNGQR) are compositionally biased toward polar residues.

It belongs to the velvet family. VeA subfamily. As to quaternary structure, component of the heterotrimeric velvet complex composed of LAE1, VE1 and VELB; VE1 acting as a bridging protein between LAE1 and VELB. Interacts with VELB and VELC.

The protein resides in the nucleus. It is found in the cytoplasm. In terms of biological role, component of the velvet transcription factor complex that controls sexual/asexual developmental ratio in response to light, promoting sexual development in the darkness while stimulating asexual sporulation under illumination. The velvet complex hat acts as a global regulator for secondary metabolite gene expression. Controls the expression of the cycotoxins fumonisins and fusarins gene cluster. Involved in cell wall integrity, cell surface hydrophobicity, hyphal polarity and conidiation pattern. Required for pathogenicity against maize seedlings. Involved in oxidative stress resistance by positively regulating the transcription of the catalase-encoding gene CAT2. The sequence is that of Developmental and secondary metabolism regulator VE1 from Gibberella moniliformis (strain M3125 / FGSC 7600) (Maize ear and stalk rot fungus).